Here is a 297-residue protein sequence, read N- to C-terminus: MAEAANVRQNLQNVPSIFEISASETLDNLIYPALSKIFDYFGLRLDFKLWGSLRIQEELSPLLTWLLQYLYLRKRASSFGESFYGLQRTVTTTGDLLNRRQQFASATLLTFMPYVERKLRTRITRHEDTSPWEQRLLSAFHAFHAAKAAHTFFYLVKYASNHSPIFRLLGLTLRYPSEPPKEDQWTYVVLKMLEVLAFFLQFVQWWYSNDQRRKVGGTLINPEAMPRKQLPKEVQQSLPQRGECPVCLLSIQTPTACSVSGYVFCWKCIVSHMKEHGTCPVTHYPISLDDLVRIYET.

Residues 1-16 (MAEAANVRQNLQNVPS) lie on the Peroxisomal matrix side of the membrane. The chain crosses the membrane as a helical span at residues 17 to 44 (IFEISASETLDNLIYPALSKIFDYFGLR). Over 45–48 (LDFK) the chain is Cytoplasmic. Residues 49–73 (LWGSLRIQEELSPLLTWLLQYLYLR) traverse the membrane as a helical segment. Residues 74–98 (KRASSFGESFYGLQRTVTTTGDLLN) lie on the Peroxisomal matrix side of the membrane. A helical membrane pass occupies residues 99-119 (RRQQFASATLLTFMPYVERKL). The Cytoplasmic portion of the chain corresponds to 120-124 (RTRIT). Residues 125–158 (RHEDTSPWEQRLLSAFHAFHAAKAAHTFFYLVKY) traverse the membrane as a helical segment. Over 159–191 (ASNHSPIFRLLGLTLRYPSEPPKEDQWTYVVLK) the chain is Peroxisomal matrix. Residues 192–219 (MLEVLAFFLQFVQWWYSNDQRRKVGGTL) traverse the membrane as a helical segment. The Cytoplasmic segment spans residues 220–297 (INPEAMPRKQ…LDDLVRIYET (78 aa)). Zn(2+)-binding residues include Cys-244, Cys-247, Cys-265, and Cys-268. Residues 244-283 (CPVCLLSIQTPTACSVSGYVFCWKCIVSHMKEHGTCPVTH) form an RING-type; degenerate zinc finger.

This sequence belongs to the pex2/pex10/pex12 family. Component of the PEX2-PEX10-PEX12 retrotranslocation channel.

It is found in the peroxisome membrane. The protein operates within protein modification; protein ubiquitination. Its function is as follows. Component of a retrotranslocation channel required for peroxisome organization by mediating export of the PEX5 receptor from peroxisomes to the cytosol, thereby promoting PEX5 recycling. The retrotranslocation channel is composed of PEX2, PEX10 and PEX12; each subunit contributing transmembrane segments that coassemble into an open channel that specifically allows the passage of PEX5 through the peroxisomal membrane. PEX12 also regulates PEX5 recycling by activating the E3 ubiquitin-protein ligase activity of PEX10. When PEX5 recycling is compromised, PEX12 stimulates PEX10-mediated polyubiquitination of PEX5, leading to its subsequent degradation. The chain is Peroxisome assembly protein 12 (Pex12) from Drosophila melanogaster (Fruit fly).